Consider the following 215-residue polypeptide: Chaperone protein TorD (215 aa).

This sequence belongs to the TorD/DmsD family. TorD subfamily.

The protein localises to the cytoplasm. Its function is as follows. Involved in the biogenesis of TorA. Acts on TorA before the insertion of the molybdenum cofactor and, as a result, probably favors a conformation of the apoenzyme that is competent for acquiring the cofactor. The sequence is that of Chaperone protein TorD from Shewanella piezotolerans (strain WP3 / JCM 13877).